Reading from the N-terminus, the 1168-residue chain is DNA-directed RNA polymerase subunit beta (1168 aa).

This sequence belongs to the RNA polymerase beta chain family. The RNAP catalytic core consists of 2 alpha, 1 beta, 1 beta' and 1 omega subunit. When a sigma factor is associated with the core the holoenzyme is formed, which can initiate transcription.

It carries out the reaction RNA(n) + a ribonucleoside 5'-triphosphate = RNA(n+1) + diphosphate. Functionally, DNA-dependent RNA polymerase catalyzes the transcription of DNA into RNA using the four ribonucleoside triphosphates as substrates. In Corynebacterium kroppenstedtii (strain DSM 44385 / JCM 11950 / CIP 105744 / CCUG 35717), this protein is DNA-directed RNA polymerase subunit beta.